Here is a 132-residue protein sequence, read N- to C-terminus: Small ribosomal subunit protein uS11 (132 aa).

The protein belongs to the universal ribosomal protein uS11 family. As to quaternary structure, part of the 30S ribosomal subunit. Interacts with proteins S7 and S18. Binds to IF-3.

Located on the platform of the 30S subunit, it bridges several disparate RNA helices of the 16S rRNA. Forms part of the Shine-Dalgarno cleft in the 70S ribosome. This chain is Small ribosomal subunit protein uS11, found in Dichelobacter nodosus (strain VCS1703A).